We begin with the raw amino-acid sequence, 271 residues long: MSEQRVTFNGDTRVLYRQAVRTPLPNEDAERLFHENMMNIADAQERKADMLADPDISLLEAYETQLEGIAKSYKRRCRHIAGDDYEEIAMAYNRGARDDRVGALTAYYFEGLWRMQQRITVTDMLFFPIILRYPDCFTVNIRFASGHTTTESVLYESPEHSTEELDDEYAERYYNESLYSQKEAAEYIRDTAEIIREEFPSPDESTFEERQYGGITSAGGRKGPVFSSMLKRVEPDPNRFSEPVDQPTLVEEGKEARRTERELLPEGAIVL.

The tract at residues 233–261 is disordered; the sequence is VEPDPNRFSEPVDQPTLVEEGKEARRTER. Over residues 251–261 the composition is skewed to basic and acidic residues; the sequence is EEGKEARRTER.

In terms of biological role, may be involved in swimming motility. This is an uncharacterized protein from Haloferax volcanii (strain ATCC 29605 / DSM 3757 / JCM 8879 / NBRC 14742 / NCIMB 2012 / VKM B-1768 / DS2) (Halobacterium volcanii).